A 266-amino-acid polypeptide reads, in one-letter code: Phosphatidylglycerol--prolipoprotein diacylglyceryl transferase (266 aa).

7 helical membrane-spanning segments follow: residues 17–37, 56–76, 92–112, 120–140, 171–191, 199–219, and 233–253; these read LKIH…WLLA, LVFW…VLFY, WKGG…VWWF, FFQL…AGRI, PSQL…LWLF, ASVS…VEFV, and WLTM…ALMV. Arg139 lines the a 1,2-diacyl-sn-glycero-3-phospho-(1'-sn-glycerol) pocket.

This sequence belongs to the Lgt family.

The protein localises to the cell inner membrane. It carries out the reaction L-cysteinyl-[prolipoprotein] + a 1,2-diacyl-sn-glycero-3-phospho-(1'-sn-glycerol) = an S-1,2-diacyl-sn-glyceryl-L-cysteinyl-[prolipoprotein] + sn-glycerol 1-phosphate + H(+). It functions in the pathway protein modification; lipoprotein biosynthesis (diacylglyceryl transfer). Its function is as follows. Catalyzes the transfer of the diacylglyceryl group from phosphatidylglycerol to the sulfhydryl group of the N-terminal cysteine of a prolipoprotein, the first step in the formation of mature lipoproteins. This is Phosphatidylglycerol--prolipoprotein diacylglyceryl transferase from Pseudomonas aeruginosa (strain UCBPP-PA14).